Here is a 333-residue protein sequence, read N- to C-terminus: Trans-1,2-dihydrobenzene-1,2-diol dehydrogenase (333 aa).

This sequence belongs to the Gfo/Idh/MocA family. As to quaternary structure, homodimer.

The enzyme catalyses (1R,2R)-1,2-dihydrobenzene-1,2-diol + NADP(+) = catechol + NADPH + H(+). It catalyses the reaction D-xylose + NADP(+) = D-xylono-1,5-lactone + NADPH + H(+). The sequence is that of Trans-1,2-dihydrobenzene-1,2-diol dehydrogenase (Dhdh) from Mus musculus (Mouse).